The following is a 379-amino-acid chain: Leukocyte elastase inhibitor (379 aa).

Position 1 is an N-acetylmethionine (Met1). N6-acetyllysine occurs at positions 137 and 177. Residues 351–379 are CARD-binding motif (CBM); sequence NFNADHPFIFFIRHNPSANILFLGRFSSP.

It belongs to the serpin family. Ov-serpin subfamily. As to quaternary structure, monomer. Interacts (via C-terminus) with CASP1; CASP4 (via CARD domain) and CASP5; these interactions regulate the activity of inflammatory caspases. Interacts with PRTN3. Interacts with GZMH. Interacts with TMSB4. In terms of processing, the N-terminus is blocked.

Its subcellular location is the secreted. It is found in the cytoplasm. The protein localises to the cytolytic granule. It localises to the early endosome. In terms of biological role, neutrophil serine protease inhibitor that plays an essential role in the regulation of the innate immune response, inflammation and cellular homeostasis. Acts primarily to protect the cell from proteases released in the cytoplasm during stress or infection. These proteases are important in killing microbes but when released from granules, these potent enzymes also destroy host proteins and contribute to mortality. Regulates the activity of the neutrophil proteases elastase, cathepsin G, proteinase-3, chymase, chymotrypsin, and kallikrein-3. Also acts as a potent intracellular inhibitor of GZMH by directly blocking its proteolytic activity. During inflammation, limits the activity of inflammatory caspases CASP1, CASP4 and CASP5 by suppressing their caspase-recruitment domain (CARD) oligomerization and enzymatic activation. When secreted, promotes the proliferation of beta-cells via its protease inhibitory function. This Equus caballus (Horse) protein is Leukocyte elastase inhibitor (SERPINB1).